We begin with the raw amino-acid sequence, 684 residues long: Putative glucan endo-1,3-beta-glucosidase btgC (684 aa).

Residues 1 to 10 (MAGVNRSFSY) show a composition bias toward polar residues. Disordered regions lie at residues 1–38 (MAGV…LYST), 124–143 (AERD…APPD), and 157–182 (DSYS…TTPS). Residues 1–302 (MAGVNRSFSY…HIIGGGSRKR (302 aa)) lie on the Cytoplasmic side of the membrane. Residues 12–32 (RGDDALLRDDEREISPLRSAE) show a composition bias toward basic and acidic residues. The chain crosses the membrane as a helical; Signal-anchor for type II membrane protein span at residues 303 to 323 (GWIVGLILAAVIVAAIVGGAV). Over 324-684 (GGILGHQEHD…IPDCGGKTIT (361 aa)) the chain is Extracellular. The disordered stretch occupies residues 330–358 (QEHDGDTSSSSSSSSSSGTGSGGSDKGDG). The span at 336–347 (TSSSSSSSSSSG) shows a compositional bias: low complexity. 4 N-linked (GlcNAc...) asparagine glycosylation sites follow: Asn404, Asn427, Asn455, and Asn474. Glu487 (proton donor) is an active-site residue. Catalysis depends on Glu586, which acts as the Nucleophile. Asn631 is a glycosylation site (N-linked (GlcNAc...) asparagine).

It belongs to the glycosyl hydrolase 17 family.

It is found in the cell membrane. The catalysed reaction is Hydrolysis of (1-&gt;3)-beta-D-glucosidic linkages in (1-&gt;3)-beta-D-glucans.. In terms of biological role, glucanases play a role in cell expansion during growth, in cell-cell fusion during mating, and in spore release during sporulation. This enzyme may be involved in beta-glucan degradation. Active on laminarin and lichenan. In Aspergillus niger (strain ATCC MYA-4892 / CBS 513.88 / FGSC A1513), this protein is Putative glucan endo-1,3-beta-glucosidase btgC (btgC).